Reading from the N-terminus, the 69-residue chain is UPF0337 protein DIP1660 (69 aa).

2 stretches are compositionally biased toward basic and acidic residues: residues 1 to 19 (MSDF…KEAV) and 30 to 41 (DEGRADQTKADV). The interval 1–42 (MSDFENKIEELGGKAKEAVGEATENEQLADEGRADQTKADVK) is disordered.

This sequence belongs to the UPF0337 (CsbD) family.

The protein is UPF0337 protein DIP1660 of Corynebacterium diphtheriae (strain ATCC 700971 / NCTC 13129 / Biotype gravis).